We begin with the raw amino-acid sequence, 345 residues long: Viral Fc-gamma receptor-like protein UL119 (345 aa).

An N-terminal signal peptide occupies residues Met1–Ser23. Positions Ser23–Ile43 are disordered. Over Ser24–Arg293 the chain is Virion surface. Asn34, Asn48, Asn95, Asn104, Asn148, Asn179, Asn198, Asn217, Asn225, Asn241, Asn244, and Asn260 each carry an N-linked (GlcNAc...) asparagine; by host glycan. Residues Gln91–Tyr190 enclose the Ig-like V-type domain. The helical transmembrane segment at Leu294–Thr314 threads the bilayer. At Tyr315 to Trp345 the chain is on the intravirion side.

It localises to the virion membrane. Functionally, serves as a receptor for the Fc part of human IgG. May thus be involved in interfering with host Ig-mediated immune responses. This is Viral Fc-gamma receptor-like protein UL119 (UL119/UL118) from Homo sapiens (Human).